The chain runs to 157 residues: Protein Smg homolog (157 aa).

It belongs to the Smg family.

The polypeptide is Protein Smg homolog (Shewanella denitrificans (strain OS217 / ATCC BAA-1090 / DSM 15013)).